A 56-amino-acid polypeptide reads, in one-letter code: Large ribosomal subunit protein bL32A (56 aa).

The tract at residues Met-1–Lys-56 is disordered. Residues Arg-7–Lys-20 show a composition bias toward basic residues. The segment covering Arg-29–Met-38 has biased composition (basic and acidic residues).

Belongs to the bacterial ribosomal protein bL32 family.

This is Large ribosomal subunit protein bL32A (rpmF1) from Listeria innocua serovar 6a (strain ATCC BAA-680 / CLIP 11262).